A 481-amino-acid chain; its full sequence is Glutamyl-tRNA(Gln) amidotransferase subunit A (481 aa).

Catalysis depends on charge relay system residues lysine 78 and serine 153. The Acyl-ester intermediate role is filled by serine 177.

Belongs to the amidase family. GatA subfamily. As to quaternary structure, heterotrimer of A, B and C subunits.

The catalysed reaction is L-glutamyl-tRNA(Gln) + L-glutamine + ATP + H2O = L-glutaminyl-tRNA(Gln) + L-glutamate + ADP + phosphate + H(+). Functionally, allows the formation of correctly charged Gln-tRNA(Gln) through the transamidation of misacylated Glu-tRNA(Gln) in organisms which lack glutaminyl-tRNA synthetase. The reaction takes place in the presence of glutamine and ATP through an activated gamma-phospho-Glu-tRNA(Gln). The protein is Glutamyl-tRNA(Gln) amidotransferase subunit A of Borrelia garinii subsp. bavariensis (strain ATCC BAA-2496 / DSM 23469 / PBi) (Borreliella bavariensis).